Reading from the N-terminus, the 94-residue chain is Small ribosomal subunit protein uS19 (94 aa).

Belongs to the universal ribosomal protein uS19 family.

Functionally, protein S19 forms a complex with S13 that binds strongly to the 16S ribosomal RNA. The chain is Small ribosomal subunit protein uS19 from Carboxydothermus hydrogenoformans (strain ATCC BAA-161 / DSM 6008 / Z-2901).